The primary structure comprises 398 residues: 8-amino-7-oxononanoate synthase (398 aa).

R23 is a binding site for substrate. Pyridoxal 5'-phosphate is bound at residue 110 to 111; sequence GY. H135 contributes to the substrate binding site. Positions 181, 209, and 237 each coordinate pyridoxal 5'-phosphate. N6-(pyridoxal phosphate)lysine is present on K240. T354 provides a ligand contact to substrate.

The protein belongs to the class-II pyridoxal-phosphate-dependent aminotransferase family. BioF subfamily. Homodimer. It depends on pyridoxal 5'-phosphate as a cofactor.

It carries out the reaction 6-carboxyhexanoyl-[ACP] + L-alanine + H(+) = (8S)-8-amino-7-oxononanoate + holo-[ACP] + CO2. It participates in cofactor biosynthesis; biotin biosynthesis. Catalyzes the decarboxylative condensation of pimeloyl-[acyl-carrier protein] and L-alanine to produce 8-amino-7-oxononanoate (AON), [acyl-carrier protein], and carbon dioxide. The chain is 8-amino-7-oxononanoate synthase from Anaeromyxobacter sp. (strain K).